The sequence spans 518 residues: Probable carboxypeptidase 2 (518 aa).

The signal sequence occupies residues 1–21 (MVAYHLLTLISLGLGSHCASA). Asparagine 46 is a glycosylation site (N-linked (GlcNAc...) asparagine). A disordered region spans residues 53-76 (PAFTSPGTVPRGFSDGTSGPTRDE). The region spanning 71–351 (GPTRDETMEG…VMAKSILQTA (281 aa)) is the Peptidase M14 domain. Asparagine 116 is a glycosylation site (N-linked (GlcNAc...) asparagine). 3 residues coordinate Zn(2+): histidine 136, glutamate 139, and histidine 224. Glutamate 322 acts as the Proton donor/acceptor in catalysis. N-linked (GlcNAc...) asparagine glycosylation is found at asparagine 393 and asparagine 459.

This sequence belongs to the peptidase M14 family. Zn(2+) serves as cofactor.

It is found in the secreted. In terms of biological role, extracellular metalloprotease that contributes to pathogenicity. This is Probable carboxypeptidase 2 (MCPB) from Trichophyton verrucosum (strain HKI 0517).